The chain runs to 300 residues: GTPase Era (300 aa).

Positions 4–172 constitute an Era-type G domain; the sequence is KSGFVALAGK…LEKIKEELPE (169 aa). The segment at 12–19 is G1; it reads GKPNVGKS. 12–19 contributes to the GTP binding site; sequence GKPNVGKS. Positions 38 to 42 are G2; it reads QTTRN. The interval 59–62 is G3; sequence DTPG. Residues 59–63 and 121–124 each bind GTP; these read DTPGI and NKID. The G4 stretch occupies residues 121 to 124; sequence NKID. Positions 151 to 153 are G5; sequence ISA. Residues 195–280 form the KH type-2 domain; that stretch reads IREKIFHLTR…YLDLNVKVKE (86 aa).

Belongs to the TRAFAC class TrmE-Era-EngA-EngB-Septin-like GTPase superfamily. Era GTPase family. In terms of assembly, monomer.

It is found in the cytoplasm. It localises to the cell inner membrane. In terms of biological role, an essential GTPase that binds both GDP and GTP, with rapid nucleotide exchange. Plays a role in 16S rRNA processing and 30S ribosomal subunit biogenesis and possibly also in cell cycle regulation and energy metabolism. This chain is GTPase Era, found in Thermotoga petrophila (strain ATCC BAA-488 / DSM 13995 / JCM 10881 / RKU-1).